Reading from the N-terminus, the 611-residue chain is Serine protease FAM111A (611 aa).

The short motif at Lys-16–Val-28 is the PIP-box element. Lys-20 participates in a covalent cross-link: Glycyl lysine isopeptide (Lys-Gly) (interchain with G-Cter in SUMO2). The residue at position 26 (Ser-26) is a Phosphoserine. Glycyl lysine isopeptide (Lys-Gly) (interchain with G-Cter in SUMO2) cross-links involve residues Lys-30 and Lys-65. Residues Glu-44–Pro-73 form a disordered region. The interval Lys-336 to Leu-611 is interaction with SV40 large T antigen. Active-site charge relay system residues include His-385, Asp-439, and Ser-541.

It belongs to the FAM111 family. Interacts (via PIP-box) with PCNA; then interaction is direct. As to quaternary structure, (Microbial infection) Interacts with SV40 virus large T antigen and this interaction is required for efficient viral replication and sustained viral gene expression in restrictive cell types. In terms of assembly, (Microbial infection) Interacts with vaccinia virus protein OPG079; this interaction promotes the degradation of OPG079. In terms of processing, autocatalytically cleaved; activating the protein. Autocatalytic cleavage takes place in trans.

Its subcellular location is the nucleus. It localises to the chromosome. The protein resides in the cytoplasm. Single-stranded DNA-binding serine protease that mediates the proteolytic cleavage of covalent DNA-protein cross-links (DPCs) during DNA synthesis, thereby playing a key role in maintaining genomic integrity. DPCs are highly toxic DNA lesions that interfere with essential chromatin transactions, such as replication and transcription, and which are induced by reactive agents, such as UV light or formaldehyde. Protects replication fork from stalling by removing DPCs, such as covalently trapped topoisomerase 1 (TOP1) adducts on DNA lesion, or poly(ADP-ribose) polymerase 1 (PARP1)-DNA complexes trapped by PARP inhibitors. Required for PCNA loading on replication sites. Promotes S-phase entry and DNA synthesis. Also acts as a restriction factor for some viruses including SV40 polyomavirus and vaccinia virus. Mechanistically, affects nuclear barrier function during viral replication by mediating the disruption of the nuclear pore complex (NPC) via its protease activity. In turn, interacts with vaccinia virus DNA-binding protein OPG079 in the cytoplasm and promotes its degradation without the need of its protease activity but through autophagy. The polypeptide is Serine protease FAM111A (Homo sapiens (Human)).